The chain runs to 353 residues: Small ribosomal subunit biogenesis GTPase RsgA (353 aa).

The segment covering 1 to 17 (MSKNKLSKGQQRRVNAN) has biased composition (polar residues). Positions 1–25 (MSKNKLSKGQQRRVNANHQRRLKTT) are disordered. In terms of domain architecture, CP-type G spans 104-274 (ASVLTRPDFY…VIDSPGVREF (171 aa)). Residues 160–163 (NKID) and 214–222 (GQSGVGKSS) each bind GTP. Zn(2+)-binding residues include C298, C303, H305, and C311.

Belongs to the TRAFAC class YlqF/YawG GTPase family. RsgA subfamily. As to quaternary structure, monomer. Associates with 30S ribosomal subunit, binds 16S rRNA. Requires Zn(2+) as cofactor.

The protein localises to the cytoplasm. In terms of biological role, one of several proteins that assist in the late maturation steps of the functional core of the 30S ribosomal subunit. Helps release RbfA from mature subunits. May play a role in the assembly of ribosomal proteins into the subunit. Circularly permuted GTPase that catalyzes slow GTP hydrolysis, GTPase activity is stimulated by the 30S ribosomal subunit. This chain is Small ribosomal subunit biogenesis GTPase RsgA, found in Klebsiella pneumoniae (strain 342).